The following is a 738-amino-acid chain: Probable trehalase (738 aa).

Residues 1–44 (MLQGMPKRSGSISELHDPFSSPDVYYGPATDPRRQKQPNKYSRT) are disordered. Substrate is bound by residues arginine 289, 296–297 (WD), asparagine 333, arginine 342, 342–344 (RSQ), and glycine 463. Residues aspartate 465 and glutamate 660 each act as proton donor/acceptor in the active site.

The protein belongs to the glycosyl hydrolase 37 family.

It catalyses the reaction alpha,alpha-trehalose + H2O = alpha-D-glucose + beta-D-glucose. This chain is Probable trehalase (NTH2), found in Eremothecium gossypii (strain ATCC 10895 / CBS 109.51 / FGSC 9923 / NRRL Y-1056) (Yeast).